The sequence spans 891 residues: Nitrate reductase [NAD(P)H] (891 aa).

Residues 1–78 (MAASVEYNRQ…VKDPRDEATS (78 aa)) form a disordered region. Residues 63–76 (LDVEPSVKDPRDEA) are compositionally biased toward basic and acidic residues. Residue Cys168 participates in Mo-molybdopterin binding. The region spanning 515 to 590 (SAQFTMSEVR…LEMYRVGELI (76 aa)) is the Cytochrome b5 heme-binding domain. 2 residues coordinate heme: His550 and His573. One can recognise an FAD-binding FR-type domain in the interval 630 to 742 (REKVRCRLVD…KGPVGHIEYA (113 aa)). Residues 682–685 (RAYT), 699–703 (LIKIY), Phe704, Phe711, 716–718 (LMS), and Thr769 each bind FAD.

Belongs to the nitrate reductase family. In terms of assembly, homodimer. FAD serves as cofactor. Heme is required as a cofactor. Requires Mo-molybdopterin as cofactor.

It catalyses the reaction nitrite + NAD(+) + H2O = nitrate + NADH + H(+). The catalysed reaction is nitrite + NADP(+) + H2O = nitrate + NADPH + H(+). Functionally, nitrate reductase is a key enzyme involved in the first step of nitrate assimilation in plants, fungi and bacteria. This chain is Nitrate reductase [NAD(P)H] (NAR-7), found in Hordeum vulgare (Barley).